Reading from the N-terminus, the 187-residue chain is Protein GrpE (187 aa).

Positions 1-26 are disordered; that stretch reads MNDLKNAENGPDEADTPQGAPSQEPD.

The protein belongs to the GrpE family. In terms of assembly, homodimer.

Its subcellular location is the cytoplasm. In terms of biological role, participates actively in the response to hyperosmotic and heat shock by preventing the aggregation of stress-denatured proteins, in association with DnaK and GrpE. It is the nucleotide exchange factor for DnaK and may function as a thermosensor. Unfolded proteins bind initially to DnaJ; upon interaction with the DnaJ-bound protein, DnaK hydrolyzes its bound ATP, resulting in the formation of a stable complex. GrpE releases ADP from DnaK; ATP binding to DnaK triggers the release of the substrate protein, thus completing the reaction cycle. Several rounds of ATP-dependent interactions between DnaJ, DnaK and GrpE are required for fully efficient folding. The sequence is that of Protein GrpE from Methylocella silvestris (strain DSM 15510 / CIP 108128 / LMG 27833 / NCIMB 13906 / BL2).